A 184-amino-acid chain; its full sequence is Ribosome-recycling factor (184 aa).

Belongs to the RRF family.

It is found in the cytoplasm. Its function is as follows. Responsible for the release of ribosomes from messenger RNA at the termination of protein biosynthesis. May increase the efficiency of translation by recycling ribosomes from one round of translation to another. In Bifidobacterium animalis subsp. lactis (strain AD011), this protein is Ribosome-recycling factor.